The sequence spans 159 residues: Phosphopantetheine adenylyltransferase (159 aa).

Threonine 10 is a binding site for substrate. ATP-binding positions include 10-11 (TF) and histidine 18. Substrate-binding residues include lysine 42, leucine 74, and arginine 88. ATP contacts are provided by residues 89–91 (GLR), glutamate 99, and 124–130 (NAFISSS).

It belongs to the bacterial CoaD family. Homohexamer. Requires Mg(2+) as cofactor.

It localises to the cytoplasm. The enzyme catalyses (R)-4'-phosphopantetheine + ATP + H(+) = 3'-dephospho-CoA + diphosphate. It participates in cofactor biosynthesis; coenzyme A biosynthesis; CoA from (R)-pantothenate: step 4/5. In terms of biological role, reversibly transfers an adenylyl group from ATP to 4'-phosphopantetheine, yielding dephospho-CoA (dPCoA) and pyrophosphate. In Campylobacter fetus subsp. fetus (strain 82-40), this protein is Phosphopantetheine adenylyltransferase.